Reading from the N-terminus, the 104-residue chain is Large ribosomal subunit protein bL21 (104 aa).

It belongs to the bacterial ribosomal protein bL21 family. Part of the 50S ribosomal subunit. Contacts protein L20.

Its function is as follows. This protein binds to 23S rRNA in the presence of protein L20. In Symbiobacterium thermophilum (strain DSM 24528 / JCM 14929 / IAM 14863 / T), this protein is Large ribosomal subunit protein bL21.